A 716-amino-acid chain; its full sequence is Forkhead box protein P2 (716 aa).

The span at 1-28 shows a compositional bias: polar residues; that stretch reads MMQESATETISNSSMNQNGMSTLSSQLD. Disordered regions lie at residues 1–45 and 286–340; these read MMQE…SEVS and KHGG…TGAS. Positions 293 to 306 are enriched in low complexity; sequence TTNNSSSTTSSTTS. The segment covering 316–325 has biased composition (polar residues); that stretch reads SIVNGQSSVL. Residues 327–338 show a composition bias toward basic and acidic residues; sequence ARRDSSSHEETG. The segment at 347–372 adopts a C2H2-type zinc-finger fold; it reads GVCKWPGCESICEDFGQFLKHLNNEH. The leucine-zipper stretch occupies residues 389-410; sequence VQQLEIQLSKERERLQAMMTHL. The segment at 423 to 427 is CTBP1-binding; that stretch reads PLNLV. Low complexity predominate over residues 439–460; the sequence is TSPQSLPQTPTTPTAPVTPITQ. The interval 439 to 466 is disordered; it reads TSPQSLPQTPTTPTAPVTPITQGPSVIT. Residues 505-595 constitute a DNA-binding region (fork-head); that stretch reads RPPFTYATLI…SQKITGSPTL (91 aa). 2 disordered regions span residues 650–669 and 679–716; these read LDHIDSNGNSSPGCSPQPHI and VIAEDEDCPMSLVTTANHSPELEDDREIEEEPLSEDLE. Residues 700–716 are compositionally biased toward acidic residues; sequence LEDDREIEEEPLSEDLE.

In terms of assembly, forms homodimers and heterodimers with FOXP1 and FOXP4. Dimerization is required for DNA-binding. Interacts with CTBP1. Interacts with FOXP1. Interacts with TBR1. Interacts with ZMYM2.

Its subcellular location is the nucleus. Functionally, transcriptional repressor that may play a role in the specification and differentiation of lung epithelium. May also play a role in developing neural, gastrointestinal and cardiovascular tissues. Can act with CTBP1 to synergistically repress transcription but CTPBP1 is not essential. Plays a role in synapse formation by regulating SRPX2 levels. This is Forkhead box protein P2 (FOXP2) from Pan paniscus (Pygmy chimpanzee).